The primary structure comprises 281 residues: Aquaporin-9 (281 aa).

At 1–17 the chain is on the cytoplasmic side; sequence MGAFVNTKVYIENKNIR. The helical transmembrane segment at 18–36 threads the bilayer; it reads DWLSEALSMFMYMSLLLGS. The Extracellular segment spans residues 37-50; it reads AATGHFSGREDDAL. Residues 51–69 traverse the membrane as a helical segment; it reads FGVIFQGFSITFGIYIGGA. The Cytoplasmic segment spans residues 70–71; it reads MS. An intramembrane region (discontinuously helical) is located at residues 72–84; the sequence is GAIINPALTLAVA. An NPA 1 motif is present at residues 76-78; that stretch reads NPA. Topologically, residues 85-90 are cytoplasmic; it reads LLGKIS. The chain crosses the membrane as a helical span at residues 91–115; it reads WRKCIVLQSAQYIGSFIASAVVYLI. The Extracellular portion of the chain corresponds to 116–157; the sequence is YNDSLDAFGAGANFTATEPGVFRKDVAGIWSTFPKTYLKERG. 2 N-linked (GlcNAc...) asparagine glycosylation sites follow: N117 and N128. Residues 158–175 traverse the membrane as a helical segment; that stretch reads AIFNQIFCSMLLTFGFLA. Residues 176–187 are Cytoplasmic-facing; sequence ISDYKNFRPSKG. Residues 188–204 form a helical membrane-spanning segment; the sequence is LFPIAVGLLVMTVFLAF. At 205-207 the chain is on the extracellular side; sequence SYS. Residues 208-222 constitute an intramembrane region (discontinuously helical); it reads TGAAMNPARDFSPRL. Positions 213-215 match the NPA 2 motif; sequence NPA. At 223–241 the chain is on the extracellular side; that stretch reads WSLIIGYGIEVFSYNQYEW. The helical transmembrane segment at 242 to 262 threads the bilayer; sequence FWIPWLMPYVGAMLGALIYQL. The Cytoplasmic segment spans residues 263 to 281; the sequence is LIGAQWSKGQKGESKHKDP.

Belongs to the MIP/aquaporin (TC 1.A.8) family.

Its subcellular location is the cell membrane. The enzyme catalyses H2O(in) = H2O(out). In terms of biological role, aquaglyceroporin that may modulate the water content and osmolytes during anhydrobiosis. The protein is Aquaporin-9 of Milnesium tardigradum (Water bear).